We begin with the raw amino-acid sequence, 221 residues long: FMN-dependent NADH:quinone oxidoreductase 1 (221 aa).

FMN contacts are provided by residues 17-19 (SAS) and 148-151 (SSGG).

Belongs to the azoreductase type 1 family. In terms of assembly, homodimer. FMN is required as a cofactor.

It catalyses the reaction 2 a quinone + NADH + H(+) = 2 a 1,4-benzosemiquinone + NAD(+). The catalysed reaction is N,N-dimethyl-1,4-phenylenediamine + anthranilate + 2 NAD(+) = 2-(4-dimethylaminophenyl)diazenylbenzoate + 2 NADH + 2 H(+). Functionally, quinone reductase that provides resistance to thiol-specific stress caused by electrophilic quinones. In terms of biological role, also exhibits azoreductase activity. Catalyzes the reductive cleavage of the azo bond in aromatic azo compounds to the corresponding amines. In Clostridium acetobutylicum (strain ATCC 824 / DSM 792 / JCM 1419 / IAM 19013 / LMG 5710 / NBRC 13948 / NRRL B-527 / VKM B-1787 / 2291 / W), this protein is FMN-dependent NADH:quinone oxidoreductase 1.